Consider the following 79-residue polypeptide: Small ribosomal subunit protein bS18 (79 aa).

The protein belongs to the bacterial ribosomal protein bS18 family. Part of the 30S ribosomal subunit. Forms a tight heterodimer with protein bS6.

Its function is as follows. Binds as a heterodimer with protein bS6 to the central domain of the 16S rRNA, where it helps stabilize the platform of the 30S subunit. This Salinispora arenicola (strain CNS-205) protein is Small ribosomal subunit protein bS18.